Consider the following 477-residue polypeptide: Argininosuccinate lyase (477 aa).

Belongs to the lyase 1 family. Argininosuccinate lyase subfamily.

It localises to the cytoplasm. The enzyme catalyses 2-(N(omega)-L-arginino)succinate = fumarate + L-arginine. It functions in the pathway amino-acid biosynthesis; L-arginine biosynthesis; L-arginine from L-ornithine and carbamoyl phosphate: step 3/3. The protein is Argininosuccinate lyase of Corynebacterium glutamicum (strain R).